The primary structure comprises 119 residues: Hydrogenase maturation factor HypA (119 aa).

Ni(2+) is bound at residue H2. 4 residues coordinate Zn(2+): C73, C76, C89, and C92.

This sequence belongs to the HypA/HybF family.

Functionally, involved in the maturation of [NiFe] hydrogenases. Required for nickel insertion into the metal center of the hydrogenase. This chain is Hydrogenase maturation factor HypA, found in Dehalococcoides mccartyi (strain ATCC BAA-2100 / JCM 16839 / KCTC 5957 / BAV1).